The chain runs to 285 residues: Bifunctional protein FolD (285 aa).

NADP(+)-binding positions include 166–168 (GAS) and Ile232.

This sequence belongs to the tetrahydrofolate dehydrogenase/cyclohydrolase family. As to quaternary structure, homodimer.

It catalyses the reaction (6R)-5,10-methylene-5,6,7,8-tetrahydrofolate + NADP(+) = (6R)-5,10-methenyltetrahydrofolate + NADPH. The catalysed reaction is (6R)-5,10-methenyltetrahydrofolate + H2O = (6R)-10-formyltetrahydrofolate + H(+). It participates in one-carbon metabolism; tetrahydrofolate interconversion. Catalyzes the oxidation of 5,10-methylenetetrahydrofolate to 5,10-methenyltetrahydrofolate and then the hydrolysis of 5,10-methenyltetrahydrofolate to 10-formyltetrahydrofolate. The protein is Bifunctional protein FolD of Vibrio vulnificus (strain CMCP6).